Reading from the N-terminus, the 352-residue chain is Peptide chain release factor 1 (352 aa).

The residue at position 233 (Gln-233) is an N5-methylglutamine. Residues 288–309 are disordered; sequence NAKDRKEQVGSGDRSERIRTYN. Basic and acidic residues predominate over residues 289–306; sequence AKDRKEQVGSGDRSERIR.

This sequence belongs to the prokaryotic/mitochondrial release factor family. In terms of processing, methylated by PrmC. Methylation increases the termination efficiency of RF1.

It is found in the cytoplasm. Peptide chain release factor 1 directs the termination of translation in response to the peptide chain termination codons UAG and UAA. The chain is Peptide chain release factor 1 from Helicobacter pylori (strain Shi470).